Reading from the N-terminus, the 315-residue chain is Ribosomal protein L11 methyltransferase (315 aa).

Positions 163, 185, 207, and 249 each coordinate S-adenosyl-L-methionine.

Belongs to the methyltransferase superfamily. PrmA family.

Its subcellular location is the cytoplasm. The enzyme catalyses L-lysyl-[protein] + 3 S-adenosyl-L-methionine = N(6),N(6),N(6)-trimethyl-L-lysyl-[protein] + 3 S-adenosyl-L-homocysteine + 3 H(+). Methylates ribosomal protein L11. The protein is Ribosomal protein L11 methyltransferase of Lactobacillus helveticus (strain DPC 4571).